Here is a 500-residue protein sequence, read N- to C-terminus: Probable cytosol aminopeptidase (500 aa).

Mn(2+) is bound by residues Lys264 and Asp269. Lys276 is a catalytic residue. Mn(2+) contacts are provided by Asp287, Asp346, and Glu348. Arg350 is an active-site residue.

The protein belongs to the peptidase M17 family. Mn(2+) is required as a cofactor.

The protein resides in the cytoplasm. It catalyses the reaction Release of an N-terminal amino acid, Xaa-|-Yaa-, in which Xaa is preferably Leu, but may be other amino acids including Pro although not Arg or Lys, and Yaa may be Pro. Amino acid amides and methyl esters are also readily hydrolyzed, but rates on arylamides are exceedingly low.. The enzyme catalyses Release of an N-terminal amino acid, preferentially leucine, but not glutamic or aspartic acids.. Its function is as follows. Presumably involved in the processing and regular turnover of intracellular proteins. Catalyzes the removal of unsubstituted N-terminal amino acids from various peptides. This Nitrobacter hamburgensis (strain DSM 10229 / NCIMB 13809 / X14) protein is Probable cytosol aminopeptidase.